A 325-amino-acid chain; its full sequence is Transaldolase (325 aa).

The Schiff-base intermediate with substrate role is filled by K125.

It belongs to the transaldolase family. Type 2 subfamily.

Its subcellular location is the cytoplasm. The catalysed reaction is D-sedoheptulose 7-phosphate + D-glyceraldehyde 3-phosphate = D-erythrose 4-phosphate + beta-D-fructose 6-phosphate. It participates in carbohydrate degradation; pentose phosphate pathway; D-glyceraldehyde 3-phosphate and beta-D-fructose 6-phosphate from D-ribose 5-phosphate and D-xylulose 5-phosphate (non-oxidative stage): step 2/3. Transaldolase is important for the balance of metabolites in the pentose-phosphate pathway. This is Transaldolase from Campylobacter jejuni subsp. jejuni serotype O:23/36 (strain 81-176).